A 543-amino-acid polypeptide reads, in one-letter code: ATP-dependent ubiquitin transferase-like protein Cap2 (543 aa).

The interval 1-159 is E2-like domain; the sequence is MSSAAAVADV…QNCIVAHANG (159 aa). Cys84 acts as the For E2-like domain in catalysis. The tract at residues 160–305 is linker domain; it reads CPLWFITDNE…YLAQRNMPNS (146 aa). The adenylation plus E1-like domain stretch occupies residues 306 to 543; sequence KTLAGKNIAV…RDRECPLCNS (238 aa). Active-site for E1-like domain residues include Cys450 and Cys453.

This sequence in the C-terminal section; belongs to the HesA/MoeB/ThiF family. Forms a Cap2-CdnA complex. A Cap2 dimer is bound on either side by a CdnA monomer.

Its function is as follows. CD-NTase priming component of a CBASS antiviral system. CBASS (cyclic oligonucleotide-based antiphage signaling system) provides immunity against bacteriophages. The CD-NTase protein (CdnA) synthesizes cyclic nucleotides in response to infection; these serve as specific second messenger signals. The signals activate a diverse range of effectors, leading to bacterial cell death and thus abortive phage infection. A type II-A(GA) CBASS system. In terms of biological role, acts as a protein transferase, conjugating CdnA, the CD-NTase, to unidentified target(s) in the cell probably via an E1-E2 ubiquitin transferase-like mechanism. This primes CdnA, upon phage infection CdnA activates and makes cyclic nucleotides. Protein conjugation requires ATP. Functionally, the capV-cdnA-cap2-cap3 operon provides about 10(4)-fold protection in strain BWHPSA011 against infection by phage PaMx41. In P.aeruginosa strain PAO1 it confers protection against phages PaMx41 and JBD18 but not JBD67 (JBD18 and JBD67 do not replicate in BWHPSA011 / Pa011). When acb2 in JBD67 is deleted this CBASS operon then protects against JDB67 also. This CBASS system limits prophage induction of lysogenized JBD67 as well as viral lytic replication. The polypeptide is ATP-dependent ubiquitin transferase-like protein Cap2 (Pseudomonas aeruginosa (strain BWHPSA011 / Pa011)).